The chain runs to 889 residues: Alanine--tRNA ligase (889 aa).

Residues histidine 587, histidine 591, cysteine 691, and histidine 695 each contribute to the Zn(2+) site. Disordered regions lie at residues 734 to 760 (QQEQESKRKAEEAVAKEQLEKQREENK) and 866 to 889 (AQGGGKDTSKKDEAISKAKSMILG). Positions 872 to 881 (DTSKKDEAIS) are enriched in basic and acidic residues.

It belongs to the class-II aminoacyl-tRNA synthetase family. Zn(2+) serves as cofactor.

Its subcellular location is the cytoplasm. It catalyses the reaction tRNA(Ala) + L-alanine + ATP = L-alanyl-tRNA(Ala) + AMP + diphosphate. Its function is as follows. Catalyzes the attachment of alanine to tRNA(Ala) in a two-step reaction: alanine is first activated by ATP to form Ala-AMP and then transferred to the acceptor end of tRNA(Ala). Also edits incorrectly charged Ser-tRNA(Ala) and Gly-tRNA(Ala) via its editing domain. The protein is Alanine--tRNA ligase of Nitrosopumilus maritimus (strain SCM1).